The chain runs to 481 residues: Glutamyl-tRNA(Gln) amidotransferase subunit A (481 aa).

Catalysis depends on charge relay system residues K78 and S153. The Acyl-ester intermediate role is filled by S177.

It belongs to the amidase family. GatA subfamily. Heterotrimer of A, B and C subunits.

The enzyme catalyses L-glutamyl-tRNA(Gln) + L-glutamine + ATP + H2O = L-glutaminyl-tRNA(Gln) + L-glutamate + ADP + phosphate + H(+). Functionally, allows the formation of correctly charged Gln-tRNA(Gln) through the transamidation of misacylated Glu-tRNA(Gln) in organisms which lack glutaminyl-tRNA synthetase. The reaction takes place in the presence of glutamine and ATP through an activated gamma-phospho-Glu-tRNA(Gln). This chain is Glutamyl-tRNA(Gln) amidotransferase subunit A, found in Borreliella afzelii (strain PKo) (Borrelia afzelii).